The primary structure comprises 336 residues: Acetyl-coenzyme A carboxylase carboxyl transferase subunit beta (336 aa).

Residues 27-297 (LWTKCESCQG…VAPAPAPAAT (271 aa)) form the CoA carboxyltransferase N-terminal domain. Zn(2+) is bound by residues C31, C34, C50, and C53. The C4-type zinc-finger motif lies at 31 to 53 (CESCQGILYRPDLERNLEVCPKC). Residues 287-336 (SVAPAPAPAATVDPEPESAEPEAPAEEAGPAGAAGDQAGESQDEGDPRNA) form a disordered region. Residues 300-311 (PEPESAEPEAPA) show a composition bias toward acidic residues. A compositionally biased stretch (low complexity) spans 312–326 (EEAGPAGAAGDQAGE).

Belongs to the AccD/PCCB family. As to quaternary structure, acetyl-CoA carboxylase is a heterohexamer composed of biotin carboxyl carrier protein (AccB), biotin carboxylase (AccC) and two subunits each of ACCase subunit alpha (AccA) and ACCase subunit beta (AccD). Requires Zn(2+) as cofactor.

The protein localises to the cytoplasm. It catalyses the reaction N(6)-carboxybiotinyl-L-lysyl-[protein] + acetyl-CoA = N(6)-biotinyl-L-lysyl-[protein] + malonyl-CoA. Its pathway is lipid metabolism; malonyl-CoA biosynthesis; malonyl-CoA from acetyl-CoA: step 1/1. In terms of biological role, component of the acetyl coenzyme A carboxylase (ACC) complex. Biotin carboxylase (BC) catalyzes the carboxylation of biotin on its carrier protein (BCCP) and then the CO(2) group is transferred by the transcarboxylase to acetyl-CoA to form malonyl-CoA. This Halorhodospira halophila (strain DSM 244 / SL1) (Ectothiorhodospira halophila (strain DSM 244 / SL1)) protein is Acetyl-coenzyme A carboxylase carboxyl transferase subunit beta.